A 285-amino-acid polypeptide reads, in one-letter code: Hypersensitive-induced reaction 1 protein (285 aa).

G2 carries the N-myristoyl glycine lipid modification. The stretch at 118–190 (FEQKNEIAKS…EKILQIKRAE (73 aa)) forms a coiled coil.

In terms of assembly, homo- and heterodimer. Interacts with LRR1 (via LRR domain). In terms of tissue distribution, constitutively expressed in stems, roots and flowers, but not in leaves and fruits.

In terms of biological role, positive regulator of hypersensitive response (HR)-like cell death. May be involved in potassium ion channel regulation. This is Hypersensitive-induced reaction 1 protein from Capsicum annuum (Capsicum pepper).